A 353-amino-acid chain; its full sequence is MESEGWPALQPLLCFAWIAATLPIIAAALPIPTAVGGHLLRRLLSAFSSRGKTVRPSPASSSGSSSSKAKFTVPQKYFMHFYVVGVLATTILLLAIWFYAYMKLTPLLLESSSYSTIFSHLVGSNSFSFGRVRSRTMGHKYRVWRTVFALLLMEVQVLRRLYETEHVFHYSPARMHIVGYLTGLFYYVAAPLSLASSCIPEAAEYFQGQVPEFVVKGRARMPDLVIDSSSLLQPLLKLGWTQWIGAVIFIWGSLHQIRCHAILGSLREHKDSDEYVIPCSDCFNRVSCPHYLAELVIYFGMLVASGAEDIPVWFLFIFLITNLSFAAVETYNWYLQKFEDYPRSRYAIIPFVC.

6 helical membrane-spanning segments follow: residues 11 to 31 (PLLC…ALPI), 78 to 98 (FMHF…AIWF), 175 to 195 (MHIV…LSLA), 234 to 254 (PLLK…WGSL), 291 to 308 (YLAE…SGAE), and 313 to 335 (WFLF…NWYL).

Belongs to the steroid 5-alpha reductase family. Polyprenal reductase subfamily.

It localises to the cell membrane. The enzyme catalyses a di-trans,poly-cis-dolichal + NADP(+) = a di-trans,poly-cis-polyprenal + NADPH + H(+). It functions in the pathway protein modification; protein glycosylation. Functionally, plays a key role in early steps of protein N-linked glycosylation by being involved in the conversion of polyprenol into dolichol. Acts as a polyprenal reductase that mediates the reduction of polyprenal into dolichal in a NADP-dependent mechanism. Dolichols are required for the synthesis of dolichol-linked monosaccharides and the oligosaccharide precursor used for N-glycosylation. The chain is Polyprenal reductase 2 from Oryza sativa subsp. indica (Rice).